A 700-amino-acid polypeptide reads, in one-letter code: Elongation factor G (700 aa).

Residues 10–286 enclose the tr-type G domain; the sequence is NKVRNIGIMA…AVIDYLPNPL (277 aa). GTP contacts are provided by residues 19-26, 83-87, and 137-140; these read AHIDAGKT, DTPGH, and NKMD.

This sequence belongs to the TRAFAC class translation factor GTPase superfamily. Classic translation factor GTPase family. EF-G/EF-2 subfamily.

It localises to the cytoplasm. Catalyzes the GTP-dependent ribosomal translocation step during translation elongation. During this step, the ribosome changes from the pre-translocational (PRE) to the post-translocational (POST) state as the newly formed A-site-bound peptidyl-tRNA and P-site-bound deacylated tRNA move to the P and E sites, respectively. Catalyzes the coordinated movement of the two tRNA molecules, the mRNA and conformational changes in the ribosome. The sequence is that of Elongation factor G from Rhodococcus erythropolis (strain PR4 / NBRC 100887).